Here is a 118-residue protein sequence, read N- to C-terminus: Small ribosomal subunit protein uS13 (118 aa).

Residues 94 to 118 are disordered; that stretch reads SLPVRGQRTKTNARTRKGPRRPIKR.

It belongs to the universal ribosomal protein uS13 family. Part of the 30S ribosomal subunit. Forms a loose heterodimer with protein S19. Forms two bridges to the 50S subunit in the 70S ribosome.

Functionally, located at the top of the head of the 30S subunit, it contacts several helices of the 16S rRNA. In the 70S ribosome it contacts the 23S rRNA (bridge B1a) and protein L5 of the 50S subunit (bridge B1b), connecting the 2 subunits; these bridges are implicated in subunit movement. Contacts the tRNAs in the A and P-sites. This is Small ribosomal subunit protein uS13 from Dichelobacter nodosus (strain VCS1703A).